We begin with the raw amino-acid sequence, 335 residues long: Serine protease 42 (335 aa).

The first 24 residues, 1-24, serve as a signal peptide directing secretion; that stretch reads MASGGGSLGLIVFLLLLQPKPCEA. An N-linked (GlcNAc...) asparagine glycan is attached at Asn-67. A Peptidase S1 domain is found at 79-315; sequence IMGGVDAEEG…YSKWLIAVVN (237 aa). Cys-104 and Cys-120 are oxidised to a cystine. Residue His-119 is the Charge relay system of the active site. A glycan (N-linked (GlcNAc...) asparagine) is linked at Asn-140. The Charge relay system role is filled by Asp-165. N-linked (GlcNAc...) asparagine glycosylation occurs at Asn-176. 3 disulfide bridges follow: Cys-199-Cys-273, Cys-232-Cys-253, and Cys-263-Cys-291. Ser-267 (charge relay system) is an active-site residue.

This sequence belongs to the peptidase S1 family. In terms of tissue distribution, testis-specific. Mainly detected in round spermatids at all the eminiferous epithelial stages (at protein level).

It is found in the cytoplasm. It localises to the cell membrane. Functionally, plays a role in spermatogenesis. Involved in germ cell survival during meiosis. Lacks protease activity in vitro. In Mus musculus (Mouse), this protein is Serine protease 42.